The chain runs to 368 residues: Zinc finger protein 24 (368 aa).

A Glycyl lysine isopeptide (Lys-Gly) (interchain with G-Cter in SUMO2) cross-link involves residue Lys22. Lys27 is covalently cross-linked (Glycyl lysine isopeptide (Lys-Gly) (interchain with G-Cter in SUMO1); alternate). Lys27 is covalently cross-linked (Glycyl lysine isopeptide (Lys-Gly) (interchain with G-Cter in SUMO2); alternate). Residues 52–134 enclose the SCAN box domain; it reads RQRFRQFGYQ…TVLEDLESEL (83 aa). Phosphoserine is present on residues Ser132 and Ser142. Glycyl lysine isopeptide (Lys-Gly) (interchain with G-Cter in SUMO2) cross-links involve residues Lys147, Lys177, and Lys236. The C2H2-type 1 zinc finger occupies 251–273; the sequence is HICDECGKHFSQGSALILHQRIH. Residues 251–301 form a necessary and sufficient for nuclear localization region; the sequence is HICDECGKHFSQGSALILHQRIHSGEKPYGCVECGKAFSRSSILVQHQRVH. A Phosphoserine modification is found at Ser274. Glycyl lysine isopeptide (Lys-Gly) (interchain with G-Cter in SUMO2) cross-links involve residues Lys277 and Lys286. 3 C2H2-type zinc fingers span residues 279–301, 307–329, and 335–357; these read YGCV…QRVH, YKCL…QRIH, and YECV…QRRH. Phosphoserine is present on Ser292. Tyr335 is subject to Phosphotyrosine. Glycyl lysine isopeptide (Lys-Gly) (interchain with G-Cter in SUMO2) cross-links involve residues Lys361 and Lys367.

Belongs to the krueppel C2H2-type zinc-finger protein family. Post-translationally, sumoylated.

It localises to the nucleus. Functionally, transcription factor required for myelination of differentiated oligodendrocytes. Required for the conversion of oligodendrocytes from the premyelinating to the myelinating state. In the developing central nervous system (CNS), involved in the maintenance in the progenitor stage by promoting the cell cycle. Specifically binds to the 5'-TCAT-3' DNA sequence. Has transcription repressor activity in vitro. The protein is Zinc finger protein 24 (ZNF24) of Pongo abelii (Sumatran orangutan).